The following is a 492-amino-acid chain: MGSCCSCLNRDSVPDNHPTKFKVTNVDDEGVELGSGVMELTQSELVLHLHRREAVRWPYLCLRRYGYDSNLFSFESGRRCQTGQGIFAFKCSRAEEIFNLLQDLMQCNSINVMEEPVIITRNSHPAELDLPRAPQPPNALGYTVSSFSNGCPGEGPRFSAPRRLSTSSLRHPSLGEESTHALIAPDEQSHTYVNTPASEDDHRRGRHCLQPLPEGQAPFLPQARGPDQRDPQVFLQPGQVKFVLGPTPARRHMVKCQGLCPSLHDPPHHNNNNEAPSECPAQPKCTYENVTGGLWRGAGWRLSPEEPGWNGLAHRRAALLHYENLPPLPPVWESQAQQLGGEAGDDGDSRDGLTPSSNGFPDGEEDETPLQKPTSTRAAIRSHGSFPVPLTRRRGSPRVFNFDFRRPGPEPPRQLNYIQVELKGWGGDRPKGPQNPSSPQAPMPTTHPARSSDSYAVIDLKKTVAMSNLQRALPRDDGTARKTRHNSTDLPL.

The N-myristoyl glycine moiety is linked to residue Gly2. The IRS-type PTB domain maps to 13–115; sequence VPDNHPTKFK…QCNSINVMEE (103 aa). Disordered stretches follow at residues 153-173, 338-455, and 467-492; these read GEGP…RHPS, QLGG…SDSY, and SNLQ…DLPL.

As to quaternary structure, binds NTRK1. Binds FGFR1, NGFR, GRB2, PTPN11 and ERK2. Phosphorylated by ULK2 in vitro. Phosphorylated on tyrosine residues upon stimulation by BFGF or NGFB.

It is found in the membrane. Its function is as follows. Adapter protein that links FGF and NGF receptors to downstream signaling pathways. Involved in the activation of MAP kinases. Down-regulates ERK2 signaling by interfering with the phosphorylation and nuclear translocation of ERK2. The polypeptide is Fibroblast growth factor receptor substrate 3 (FRS3) (Homo sapiens (Human)).